The sequence spans 110 residues: Ribonuclease H2 subunit C (110 aa).

Residues Leu45 to Ile69 form a disordered region. The segment covering Ala51–Asn66 has biased composition (low complexity).

It belongs to the RNase H2 subunit C family. Highly divergent. As to quaternary structure, the RNase 2 complex is a heterotrimer composed of the catalytic subunit RNH201 and of the non-catalytic subunits RNH202 and RNH203.

The protein localises to the cytoplasm. The protein resides in the nucleus. In terms of biological role, non catalytic subunit of RNase H2, an endonuclease that specifically degrades the RNA of RNA:DNA hybrids. Participates in DNA replication, possibly by mediating the removal of lagging-strand Okazaki fragment RNA primers during DNA replication. Mediates the excision of single ribonucleotides from DNA:RNA duplexes. The sequence is that of Ribonuclease H2 subunit C (RNH203) from Saccharomyces cerevisiae (strain ATCC 204508 / S288c) (Baker's yeast).